A 241-amino-acid chain; its full sequence is Orotidine 5'-phosphate decarboxylase (241 aa).

Substrate-binding positions include aspartate 16, lysine 37, aspartate 64–threonine 73, threonine 128, arginine 190, glutamine 199, glycine 219, and arginine 220. The active-site Proton donor is the lysine 66.

It belongs to the OMP decarboxylase family. Type 1 subfamily. Homodimer.

The catalysed reaction is orotidine 5'-phosphate + H(+) = UMP + CO2. It functions in the pathway pyrimidine metabolism; UMP biosynthesis via de novo pathway; UMP from orotate: step 2/2. Functionally, catalyzes the decarboxylation of orotidine 5'-monophosphate (OMP) to uridine 5'-monophosphate (UMP). The polypeptide is Orotidine 5'-phosphate decarboxylase (Prochlorococcus marinus (strain NATL1A)).